The primary structure comprises 311 residues: Malate dehydrogenase (311 aa).

NAD(+) contacts are provided by residues 7–13 (GAAGGIG) and D34. Residues R81 and R87 each coordinate substrate. Residues N94 and 117–119 (ITN) contribute to the NAD(+) site. N119 and R153 together coordinate substrate. H177 acts as the Proton acceptor in catalysis. Residue M227 coordinates NAD(+).

The protein belongs to the LDH/MDH superfamily. MDH type 1 family. In terms of assembly, homodimer.

It carries out the reaction (S)-malate + NAD(+) = oxaloacetate + NADH + H(+). Its function is as follows. Catalyzes the reversible oxidation of malate to oxaloacetate. The sequence is that of Malate dehydrogenase from Vibrio parahaemolyticus serotype O3:K6 (strain RIMD 2210633).